The chain runs to 631 residues: Peptidyl-prolyl cis-trans isomerase CYP71 (631 aa).

A disordered region spans residues 26–45 (VEEEEPMVGPGPAPRGKRKR). WD repeat units lie at residues 68–106 (MHRD…IEFA), 111–150 (SHLG…MMAM), 201–240 (IHMN…FPED), and 257–297 (KCKT…RRVY). The region spanning 474–628 (LPENVIMHTT…QDVKILNVTV (155 aa)) is the PPIase cyclophilin-type domain.

This sequence belongs to the cyclophilin-type PPIase family. As to quaternary structure, interacts with FAS1 and LHP1. Interacts (via WD repeat domain) with histone H3. As to expression, ubiquitous. Expressed in the meristems.

Its subcellular location is the nucleus. It catalyses the reaction [protein]-peptidylproline (omega=180) = [protein]-peptidylproline (omega=0). In terms of biological role, PPIases accelerate the folding of proteins. It catalyzes the cis-trans isomerization of proline imidic peptide bonds in oligopeptides. Histone proline isomerase that increases the rate of cis-trans isomerization of the synthetic histone H3 peptides H3P30 (RKSAP30F-p-nitroanilide) and H3P30K27me3 (RKme3-SAP30F-p-nitroanilide) in the histone H3 N-terminal tail, in vitro. Histone remodeling factor involved in chromatin-based gene silencing. Reinforces H3K27 methylation. Involved in fundamental processes of chromatin assembly and histone modification by mediating the targeting of FAS1 and LHP1 on the chromatin. Required for the formation and development of leaves, for normal phyllotaxy and for the formation, maintenance and activity of root and shoot apical meristems. The sequence is that of Peptidyl-prolyl cis-trans isomerase CYP71 from Arabidopsis thaliana (Mouse-ear cress).